The chain runs to 80 residues: Translation initiation factor IF-1, chloroplastic (80 aa).

One can recognise an S1-like domain in the interval 1 to 72 (MKKQNLIDME…TKGRIIYRLR (72 aa)).

The protein belongs to the IF-1 family. In terms of assembly, component of the 30S ribosomal translation pre-initiation complex which assembles on the 30S ribosome in the order IF-2 and IF-3, IF-1 and N-formylmethionyl-tRNA(fMet); mRNA recruitment can occur at any time during PIC assembly.

It is found in the plastid. The protein resides in the chloroplast. In terms of biological role, one of the essential components for the initiation of protein synthesis. Stabilizes the binding of IF-2 and IF-3 on the 30S subunit to which N-formylmethionyl-tRNA(fMet) subsequently binds. Helps modulate mRNA selection, yielding the 30S pre-initiation complex (PIC). Upon addition of the 50S ribosomal subunit IF-1, IF-2 and IF-3 are released leaving the mature 70S translation initiation complex. The chain is Translation initiation factor IF-1, chloroplastic from Adiantum capillus-veneris (Maidenhair fern).